A 423-amino-acid chain; its full sequence is Glycine amidinotransferase, mitochondrial (423 aa).

The transit peptide at 1-43 (MLRVRCLRGGSRGAEAVHYIGSRLGRTLTGWVQRTFQSTQAAT) directs the protein to the mitochondrion. A disordered region spans residues 43–63 (TASSRNSFAADDKATEPLPKD). Phosphoserine is present on residues Ser46 and Ser49. Positions 52–61 (ADDKATEPLP) are enriched in basic and acidic residues. Position 170 (Asp170) interacts with arginine. Catalysis depends on residues Asp254 and His303. Residues Asp305, Arg322, Ser354, and Ser355 each coordinate arginine. Lys385 carries the N6-acetyllysine modification. Catalysis depends on Cys407, which acts as the Amidino-cysteine intermediate.

This sequence belongs to the amidinotransferase family. As to quaternary structure, homodimer.

The protein resides in the mitochondrion inner membrane. It carries out the reaction L-arginine + glycine = guanidinoacetate + L-ornithine. It catalyses the reaction 4-aminobutanoate + L-arginine = 4-guanidinobutanoate + L-ornithine. The catalysed reaction is beta-alanine + L-arginine = 3-guanidinopropanoate + L-ornithine. The enzyme catalyses taurine + L-arginine = taurocyamine + L-ornithine. The protein operates within amine and polyamine biosynthesis; creatine biosynthesis; creatine from L-arginine and glycine: step 1/2. Its function is as follows. Transamidinase that catalyzes the transfer of the amidino group of L-arginine onto the amino moiety of acceptor metabolites such as glycine, beta-alanine, gamma-aminobutyric acid (GABA) and taurine yielding the corresponding guanidine derivatives. Catalyzes the rate-limiting step of creatine biosynthesis, namely the transfer of the amidino group from L-arginine to glycine to generate guanidinoacetate, which is then methylated by GAMT to form creatine. Provides creatine as a source for ATP generation in tissues with high energy demands, in particular skeletal muscle, heart and brain. This chain is Glycine amidinotransferase, mitochondrial (GATM), found in Macaca fascicularis (Crab-eating macaque).